We begin with the raw amino-acid sequence, 432 residues long: Nuclear pore complex-interacting protein family member B9 (432 aa).

2 disordered regions span residues 260-280 and 353-420; these read RMGRQPPPPTQQHSITDNSLS and SPLP…LRTR. Positions 270–280 are enriched in polar residues; sequence QQHSITDNSLS. A compositionally biased stretch (basic and acidic residues) spans 374–402; it reads EVEKPPKPKRWRVDEVEQSPKPKRQREAE. A compositionally biased stretch (basic residues) spans 408–420; the sequence is KPKRRRLSKLRTR.

This sequence belongs to the NPIP family.

This chain is Nuclear pore complex-interacting protein family member B9 (NPIPB9), found in Homo sapiens (Human).